The primary structure comprises 195 residues: Cyclin-dependent kinase inhibitor 7 (195 aa).

The segment covering 1 to 11 (MSETKPKRDSE) has biased composition (basic and acidic residues). Disordered stretches follow at residues 1-50 (MSET…SVSD), 61-80 (EEED…SSET), and 117-154 (SSEN…TQAE). Low complexity-rich tracts occupy residues 37 to 50 (SSSS…SVSD) and 68 to 80 (SSSI…SSET). T151 carries the post-translational modification Phosphothreonine; by KIN10.

This sequence belongs to the CDI family. ICK/KRP subfamily. Specifically interacts with CDKA-1, but not with CDKB1-1. Interacts with CYCD4-1. Binds to FBL17. In terms of processing, ubiquitinated by SCF(FBL17). Ubiquitination leads to its subsequent degradation, thus controlling cell cycle progression. As to expression, expressed in flowers, in developing pollen, and at lower levels in roots and leaves.

It is found in the nucleus. Its subcellular location is the nucleoplasm. In terms of biological role, binds and inhibits CYCD2-1/CDKA-1 complex kinase activity. May target specifically CDKA-1. This Arabidopsis thaliana (Mouse-ear cress) protein is Cyclin-dependent kinase inhibitor 7 (KRP7).